Here is a 37-residue protein sequence, read N- to C-terminus: Photosystem I reaction center subunit VIII (37 aa).

A helical transmembrane segment spans residues 10–30; the sequence is IFVPLVGLVFPAIAMASLSLY.

The protein belongs to the PsaI family.

The protein resides in the plastid. It localises to the chloroplast thylakoid membrane. Its function is as follows. May help in the organization of the PsaL subunit. The chain is Photosystem I reaction center subunit VIII from Gossypium barbadense (Sea Island cotton).